The primary structure comprises 1292 residues: (E3-independent) E2 ubiquitin-conjugating enzyme (1292 aa).

A compositionally biased stretch (pro residues) spans 1-37; the sequence is MADPAAPTPAAPAPAQAPAPAPEAVPAPAAAPVPAPA. Disordered stretches follow at residues 1–56 and 85–114; these read MADP…EAGS and EDSDSEGEEEGRGSSGCSEAGGAGHEEGRA. Residues 38 to 56 are compositionally biased toward low complexity; it reads PASDSASGPSSDSGPEAGS. S50, S87, S89, S399, and S401 each carry phosphoserine. 3 disordered regions span residues 401 to 459, 472 to 519, and 714 to 746; these read SPDT…AGEQ, RLHS…IPLS, and IEESDYDSVEGSTSGASSDEWEDDSDSWETDNG. The segment covering 406–427 has biased composition (basic and acidic residues); it reads CSRDHSMEDPDKKGESKTKSEA. Residue S441 is modified to Phosphoserine. Acidic residues predominate over residues 478 to 490; it reads QDADDEAADDTDD. A phosphothreonine mark is found at T488 and T491. Positions 491–510 are enriched in low complexity; sequence TSSVTSSASSTTSSQSGSGT. The Nuclear localization signal signature appears at 512 to 536; it reads RKKSIPLSIKNLKRKHKRKKNKITR. Phosphoserine is present on S515. Positions 732–742 are enriched in acidic residues; sequence DEWEDDSDSWE. Residues 812-882 are a coiled coil; it reads RELKEAIKIL…IVEEEKMEAV (71 aa). S836 bears the Phosphoserine mark. T838 bears the Phosphothreonine mark. Position 839 is a phosphoserine (S839). Residues 882–893 are compositionally biased toward basic and acidic residues; that stretch reads VPDVERKEDKPE. Positions 882–903 are disordered; sequence VPDVERKEDKPEGQSPVKAEWP. Residue S896 is modified to Phosphoserine. In terms of domain architecture, UBC core spans 953–1113; sequence KFFSTVRKEM…ALIRVVQSMT (161 aa). C1040 (glycyl thioester intermediate) is an active-site residue. The interval 1160 to 1248 is disordered; sequence NGVPKASSSP…KSYRSFLPEK (89 aa).

This sequence belongs to the ubiquitin-conjugating enzyme family. In terms of assembly, interacts with CPNE1 (via VWFA domain) and CPNE4 (via VWFA domain). Interacts with UBR2. Phosphorylated. Phosphorylation affects subcellular location. Post-translationally, ubiquitinated: autoubiquitinates, possibly affecting its subcellular location. Predominantly expressed in skeletal muscle and heart.

Its subcellular location is the cytoplasm. It is found in the nucleus. It carries out the reaction S-ubiquitinyl-[E1 ubiquitin-activating enzyme]-L-cysteine + [acceptor protein]-L-lysine = [E1 ubiquitin-activating enzyme]-L-cysteine + N(6)-monoubiquitinyl-[acceptor protein]-L-lysine.. Its pathway is protein modification; protein ubiquitination. With respect to regulation, inhibited by phenylarsine oxide (PAO). E2/E3 hybrid ubiquitin-protein ligase that displays both E2 and E3 ligase activities and mediates monoubiquitination of target proteins. Negatively regulates TRAF6-mediated NF-kappa-B activation independently of its E2 activity. Acts as a positive regulator of BMP7 signaling by mediating monoubiquitination of SMAD6, thereby regulating adipogenesis. Mediates monoubiquitination at different sites of the nuclear localization signal (NLS) of BAP1, leading to cytoplasmic retention of BAP1. Also able to monoubiquitinate the NLS of other chromatin-associated proteins, such as INO80 and CXXC1, affecting their subcellular location. Acts as a regulator of retrograde transport by assisting the TRIM27:MAGEL2 E3 ubiquitin ligase complex to mediate 'Lys-63'-linked ubiquitination of WASHC1, leading to promote endosomal F-actin assembly. This Homo sapiens (Human) protein is (E3-independent) E2 ubiquitin-conjugating enzyme (UBE2O).